We begin with the raw amino-acid sequence, 918 residues long: Interleukin-6 receptor subunit beta (918 aa).

Positions Met-1–Gly-22 are cleaved as a signal peptide. Topologically, residues Glu-23–Glu-619 are extracellular. In terms of domain architecture, Ig-like C2-type spans Asp-26–Ile-120. Disulfide bonds link Cys-28/Cys-54 and Cys-48/Cys-103. N-linked (GlcNAc...) asparagine glycans are attached at residues Asn-43, Asn-83, and Asn-131. Fibronectin type-III domains follow at residues Pro-125–Pro-216, Pro-224–Asp-324, Ala-329–Thr-424, Pro-426–Ala-517, and Pro-518–Phe-613. Cys-134 and Cys-144 form a disulfide bridge. The N-linked (GlcNAc...) asparagine glycan is linked to Asn-157. Cys-172 and Cys-182 are oxidised to a cystine. A glycan (N-linked (GlcNAc...) asparagine) is linked at Asn-227. Residues Trp-310–Ser-314 carry the WSXWS motif motif. N-linked (GlcNAc...) asparagine glycosylation is found at Asn-379 and Asn-383. An N-linked (GlcNAc...) (complex) asparagine glycan is attached at Asn-390. Cys-458 and Cys-466 are oxidised to a cystine. Residues Asn-553 and Asn-564 are each glycosylated (N-linked (GlcNAc...) asparagine). A helical membrane pass occupies residues Ala-620–Phe-641. Over Asn-642 to Gln-918 the chain is Cytoplasmic. The Box 1 motif signature appears at Ile-651–Ser-659. Disordered stretches follow at residues Lys-660–Gln-681 and Glu-722–Gln-758. A phosphoserine mark is found at Ser-661 and Ser-667. Residues Ser-731–Ser-755 are compositionally biased toward low complexity. Phosphoserine is present on residues Ser-782, Ser-789, Ser-829, and Ser-839.

Belongs to the type I cytokine receptor family. Type 2 subfamily. As to quaternary structure, component of a hexamer of two molecules each of IL6, IL6R and IL6ST; associates with the complex IL6:IL6R but does not interact with IL6. Forms heterodimers composed of LIFR and IL6ST (type I OSM receptor) which are activated by LIF and OSM. Also forms heterodimers composed of OSMR and IL6ST (type II receptor) which are activated by OSM but not by LIF. Component of a receptor complex composed of IL6ST/GP130, IL27RA/WSX1 and CNTFR which interacts with the neuroprotective peptide humanin. Interacts with HCK. Interacts with INPP5D/SHIP1. Interacts with SRC and YES. Interacts with ARMH4; this interaction prevents IL6ST protein homodimerization and bridges ARMH4 with IL6R and STAT3 and therefore inhibits phosphorylation of STAT3 at 'Tyr-705'. In terms of assembly, (Microbial infection) The homodimer binds two molecules of herpes virus 8/HHV-8 protein vIL-6. Phosphorylation of Ser-782 down-regulates cell surface expression. In terms of processing, heavily N-glycosylated. Glycosylation is required for protein stability and localization in plasma membrane but not for ligand binding. In terms of tissue distribution, found in all the tissues and cell lines examined. Expression not restricted to IL6 responsive cells. As to expression, expressed in blood serum (at protein level).

Its subcellular location is the cell membrane. It is found in the secreted. Its function is as follows. Signal-transducing molecule. The receptor systems for IL6, LIF, OSM, CNTF, IL11, CTF1 and BSF3 can utilize IL6ST for initiating signal transmission. Binding of IL6 to IL6R induces IL6ST homodimerization and formation of a high-affinity receptor complex, which activates the intracellular JAK-MAPK and JAK-STAT3 signaling pathways. That causes phosphorylation of IL6ST tyrosine residues which in turn activates STAT3. In parallel, the IL6 signaling pathway induces the expression of two cytokine receptor signaling inhibitors, SOCS1 and SOCS3, which inhibit JAK and terminate the activity of the IL6 signaling pathway as a negative feedback loop. Also activates the yes-associated protein 1 (YAP) and NOTCH pathways to control inflammation-induced epithelial regeneration, independently of STAT3. Acts as a receptor for the neuroprotective peptide humanin as part of a complex with IL27RA/WSX1 and CNTFR. Mediates signals which regulate immune response, hematopoiesis, pain control and bone metabolism. Has a role in embryonic development. Essential for survival of motor and sensory neurons and for differentiation of astrocytes. Required for expression of TRPA1 in nociceptive neurons. Required for the maintenance of PTH1R expression in the osteoblast lineage and for the stimulation of PTH-induced osteoblast differentiation. Required for normal trabecular bone mass and cortical bone composition. In terms of biological role, binds to the soluble IL6:sIL6R complex (hyper-IL6), thereby blocking IL6 trans-signaling. Inhibits sIL6R-dependent acute phase response. Also blocks IL11 cluster signaling through IL11R. The protein is Interleukin-6 receptor subunit beta of Homo sapiens (Human).